The sequence spans 187 residues: Cytokinin riboside 5'-monophosphate phosphoribohydrolase (187 aa).

Lysine 74 is covalently cross-linked (Isoglutamyl lysine isopeptide (Lys-Gln) (interchain with Q-Cter in protein Pup)). Substrate contacts are provided by residues glutamate 80, 98–99, 115–121, and threonine 127; these read RK and GVGTLDE.

The protein belongs to the LOG family. Homodimer. Post-translationally, pupylated at Lys-74 by the prokaryotic ubiquitin-like protein Pup, which leads to its degradation by the proteasome. The proteasomal control of cytokinin synthesis is essential to protect M.tuberculosis against host-produced NO.

It carries out the reaction N(6)-(dimethylallyl)adenosine 5'-phosphate + H2O = N(6)-dimethylallyladenine + D-ribose 5-phosphate. It catalyses the reaction 9-ribosyl-trans-zeatin 5'-phosphate + H2O = trans-zeatin + D-ribose 5-phosphate. Its function is as follows. Catalyzes the hydrolytic removal of ribose 5'-monophosphate from nitrogen N6-modified adenosines, the final step of bioactive cytokinin synthesis. Is involved in the synthesis of isopentenyladenine (iP) and 2-methylthio-iP (2MeS-iP), the most abundant cytokinins detected in M.tuberculosis lysates and supernatants. Is also able to convert trans-zeatin-riboside monophosphate (tZRMP) to trans-zeatin (tZ) in vitro; however, it may not be involved in the biosynthesis of this minor cytokinin in vivo. Accumulation of Rv1205 sensitizes M.tuberculosis to nitric oxide since cytokinin breakdown products synergize with NO to kill M.tuberculosis. Shows a slow AMP hydrolase activity, but is not able to hydrolyze ATP. Displays no lysine decarboxylase (LDC) activity (L-lysine conversion to cadaverine). The chain is Cytokinin riboside 5'-monophosphate phosphoribohydrolase from Mycobacterium tuberculosis (strain ATCC 25618 / H37Rv).